The sequence spans 368 residues: CST complex subunit STN1 (368 aa).

Positions 2–192 (AVSLGDDDAD…KCYDQPFKMP (191 aa)) are interaction with CTC1. The segment at residues 58–162 (VDVLGIVVYK…EIKATSFYKV (105 aa)) is a DNA-binding region (OB). Winged helix-turn-helix (wHTH) regions lie at residues 201–295 (AGGS…NVTE) and 296–368 (QDKD…YIVL).

It belongs to the CTC1 family. Component of the CST complex.

It localises to the nucleus. It is found in the chromosome. Its subcellular location is the telomere. Component of the CST complex proposed to act as a specialized replication factor promoting DNA replication under conditions of replication stress or natural replication barriers such as the telomere duplex. The CST complex binds single-stranded DNA with high affinity in a sequence-independent manner, while isolated subunits bind DNA with low affinity by themselves. Initially the CST complex has been proposed to protect telomeres from DNA degradation. However, the CST complex has been shown to be involved in several aspects of telomere replication. This is CST complex subunit STN1 from Danio rerio (Zebrafish).